The primary structure comprises 67 residues: Large ribosomal subunit protein uL29 (67 aa).

It belongs to the universal ribosomal protein uL29 family.

This is Large ribosomal subunit protein uL29 from Clostridium acetobutylicum (strain ATCC 824 / DSM 792 / JCM 1419 / IAM 19013 / LMG 5710 / NBRC 13948 / NRRL B-527 / VKM B-1787 / 2291 / W).